The chain runs to 873 residues: MVANGHFFAGVGDVLDGKNYEHGVQVVDEEKEFNPNLSNYLTYENVTPAGFNYHLISVFGSQSTGKSTLLNSLFGTHFSVMSETERRQTTKGIWLSKNKGLKSDKGQDNQTKMADNILVMDVEGTDGRERGEDQDFERKSALFALATSEVLIVNIWEHQVGLYQGANMGLLKTVFEVNLELFLKDKRSNPRSLLFFVIRDFLGTTPLQNLQNTLLQDLNRIWNSLSKPAGLENSSITDYFDFAFAGLPHKNFQPEKFVDEVQKLSTRFCDGHRDPNKTDAKGTGSIEGGIFLPEYHRRIPADGFAVYAEGIWDQIVNNKDLDLPTQQELLAQFRCDEISREVLVAFDEAISPFEAKQAEAVQAGNPQVLGGLGSAMRNARMKSVKNFDTEASRYHKRVYQMKKSELQDKIDFRLKALFLGQLSAAHRSGIQEFTESVTAAVKAGQKRGASYDFAEIVKKERKLAIEKFEQEARATVVEDTQWSNYQQELSLYQKDLEIIGGQLRRDEMRRLATRVERWVRSRLGESIDLEFNAIGSGRSGSGAPEFGDKPSEKSLWDRVWTLFIDIVLDAERRFTERASSFDASIDEVDVGLWRLRRKSWGVLRAKIDEEMMEGNILLKLRENFEDKFRYDDAGVPRIWRPNDDIESIYTRARESTLTLIPLLSRFRLSETNAPPPLDKWIGHTPSSATPADEEDLTPIGGVDEDEGKSLEEEMTMIGEAKKQDLTVRFKKTADGVYVEAKRSAIGGITQVPLYFYGLLLALGWNEIVAVLRNPAYFLLLFVCAVTAYVTYQLNLWGPIIKMTEAASQQALMEGKRRLREFLEASDTGLQTMAMSEGRNAEGYDMSNMKNRKSAGGYQNNRSHIDDADDDDDF.

Over 1-750 (MVANGHFFAG…KRSAIGGITQ (750 aa)) the chain is Cytoplasmic. Residues 50-308 (GFNYHLISVF…IPADGFAVYA (259 aa)) form the GB1/RHD3-type G domain. Position 60–67 (60–67 (GSQSTGKS)) interacts with GTP. Residues 677 to 701 (LDKWIGHTPSSATPADEEDLTPIGG) are disordered. The span at 691–701 (ADEEDLTPIGG) shows a compositional bias: acidic residues. Residues 751-771 (VPLYFYGLLLALGWNEIVAVL) form a helical membrane-spanning segment. At 772–774 (RNP) the chain is on the lumenal side. Residues 775 to 795 (AYFLLLFVCAVTAYVTYQLNL) form a helical membrane-spanning segment. The Cytoplasmic portion of the chain corresponds to 796-873 (WGPIIKMTEA…IDDADDDDDF (78 aa)). The disordered stretch occupies residues 841-873 (EGYDMSNMKNRKSAGGYQNNRSHIDDADDDDDF).

Belongs to the TRAFAC class dynamin-like GTPase superfamily. GB1/RHD3 GTPase family. RHD3 subfamily.

The protein resides in the endoplasmic reticulum membrane. Cooperates with the reticulon proteins and tubule-shaping DP1 family proteins to generate and maintain the structure of the tubular endoplasmic reticulum network. Has GTPase activity, which is required for its function in ER organization. This is Protein SEY1 from Paracoccidioides lutzii (strain ATCC MYA-826 / Pb01) (Paracoccidioides brasiliensis).